Here is a 1538-residue protein sequence, read N- to C-terminus: CLIP-associating protein 1 (1538 aa).

HEAT repeat units follow at residues 87–124 (AQIGTVLPSLIDRLGDAKDSVREQDQTLLLKIMDQAAN) and 163–200 (LTLSKIVPHICNLLGDPNSQVRDAAINSLVEIYRHVGE). The segment at 235 to 292 (SANDKNFDDEDSVDGNRPSSASSTSSKAPPSSRRNVGMGTTRRLGSSTLGSKSSAAKE) is disordered. Residue Ser-246 is modified to Phosphoserine. Residues 251-268 (RPSSASSTSSKAPPSSRR) are compositionally biased toward low complexity. HEAT repeat units follow at residues 405–440 (HGAEAIMPTIFNLIPNSAKIMATSGVVAVRLIIRHT) and 441–477 (HIPRLIPVITSNCTSKSVAVRRRCFEFLDLLLQEWQT). Residues 543 to 783 (SDSIVSLPQS…DRFGLGQPGR (241 aa)) are disordered. Phosphoserine occurs at positions 545, 548, 558, 559, and 568. A compositionally biased stretch (low complexity) spans 548-567 (SLPQSDRSSSSSQESLNRPL). Residues 574-594 (TGSTTSRASTVSTKSVSTTGS) show a composition bias toward low complexity. A Phosphoserine modification is found at Ser-600. Residues 606 to 628 (AAASAKSKVSSSSGTTPFSSAAA) are compositionally biased toward low complexity. Residues Ser-636, Ser-646, Ser-647, and Ser-649 each carry the phosphoserine modification. Polar residues predominate over residues 645–658 (QSSGSATNVASTPD). Thr-656 is subject to Phosphothreonine. Residues 662 to 785 (RSRAKVVSQS…FGLGQPGRIP (124 aa)) form an interaction with microtubules, MAPRE1 and MAPRE3 region. Residues 673-692 (RSRSANPAGAGSRSSSPGKL) show a composition bias toward low complexity. Phosphoserine occurs at positions 684, 688, 695, and 705. Positions 693 to 705 (LGSGYGGLTGGSS) are enriched in gly residues. Thr-711 carries the post-translational modification Phosphothreonine. At Ser-714 the chain carries Phosphoserine. Residues 724–733 (QGCSRETSPN) show a composition bias toward polar residues. Phosphoserine occurs at positions 787, 797, and 823. An HEAT 5 repeat occupies 974 to 1011 (QQFNILMRFIVDQTQTPNLKVKVAILKYIESLARQMDP). Disordered stretches follow at residues 1080–1120 (HLKN…CSHG) and 1136–1156 (AKHPPPFSQPNSIPTAPSHKA). Over residues 1082-1097 (KNSSNTSVGSPSNTIG) the composition is skewed to polar residues. Ser-1091 is subject to Phosphoserine. A phosphothreonine mark is found at Thr-1095 and Thr-1099. Low complexity predominate over residues 1106–1115 (SRTSPLTSPT). The residue at position 1113 (Ser-1113) is a Phosphoserine. A phosphoserine mark is found at Ser-1196 and Ser-1223. The tract at residues 1215-1238 (VSRDGGAASPATEGRGGSEVEGGR) is disordered. The tract at residues 1254–1538 (RAFPGPRARD…SSSSDVSTHS (285 aa)) is interaction with CLIP2. The tract at residues 1254–1538 (RAFPGPRARD…SSSSDVSTHS (285 aa)) is interaction with PHLDB2 and RSN. Residues 1256-1538 (FPGPRARDYN…SSSSDVSTHS (283 aa)) form a localization to kinetochores region. A coiled-coil region spans residues 1299-1330 (DHSDLVADLLKELSNHNERVEERKGALLELLK). HEAT repeat units follow at residues 1342–1379 (EHFKTILLLLLETLGDKDHSIRALALRVLREILRNQPA) and 1460–1497 (QLLVDIIPGLLQGYDNTESSVRKASVFCLVAIYSVIGE).

This sequence belongs to the CLASP family. As to quaternary structure, interacts with CLIP2, ERC1, MAPRE1, MAPRE3, microtubules, PHLDB2 and RSN. The interaction with ERC1 may be mediated by PHLDB2. Interacts with GCC2; recruits CLASP1 to Golgi membranes. Interacts with MACF1. Interacts with mtcl2 and MTCL1.

It is found in the cytoplasm. It localises to the cytoskeleton. The protein localises to the microtubule organizing center. Its subcellular location is the centrosome. The protein resides in the chromosome. It is found in the centromere. It localises to the kinetochore. The protein localises to the spindle. Its subcellular location is the golgi apparatus. The protein resides in the trans-Golgi network. Microtubule plus-end tracking protein that promotes the stabilization of dynamic microtubules. Involved in the nucleation of noncentrosomal microtubules originating from the trans-Golgi network (TGN). Required for the polarization of the cytoplasmic microtubule arrays in migrating cells towards the leading edge of the cell. May act at the cell cortex to enhance the frequency of rescue of depolymerizing microtubules by attaching their plus-ends to cortical platforms composed of ERC1 and PHLDB2. This cortical microtubule stabilizing activity is regulated at least in part by phosphatidylinositol 3-kinase signaling. Also performs a similar stabilizing function at the kinetochore which is essential for the bipolar alignment of chromosomes on the mitotic spindle. The chain is CLIP-associating protein 1 (CLASP1) from Homo sapiens (Human).